Consider the following 353-residue polypeptide: Photosystem II D2 protein (353 aa).

The residue at position 2 (Thr-2) is an N-acetylthreonine. Thr-2 is modified (phosphothreonine). Residues 41–61 form a helical membrane-spanning segment; sequence CAYFALGGWFTGTTFVTSWYT. Position 118 (His-118) interacts with chlorophyll a. A helical transmembrane segment spans residues 125–141; the sequence is GFMLRQFELARSVQLRP. Residues Gln-130 and Asn-143 each coordinate pheophytin a. The helical transmembrane segment at 153–166 threads the bilayer; it reads VFVSVSLIYPLGQA. His-198 is a binding site for chlorophyll a. A helical transmembrane segment spans residues 208 to 228; the sequence is AALLCAIHGATVENTLFEDGD. Residues His-215 and Phe-262 each contribute to the a plastoquinone site. His-215 lines the Fe cation pocket. A Fe cation-binding site is contributed by His-269. A helical membrane pass occupies residues 279–295; the sequence is GLWMSAIGVVGLALNLR.

The protein belongs to the reaction center PufL/M/PsbA/D family. PSII is composed of 1 copy each of membrane proteins PsbA, PsbB, PsbC, PsbD, PsbE, PsbF, PsbH, PsbI, PsbJ, PsbK, PsbL, PsbM, PsbT, PsbX, PsbY, PsbZ, Psb30/Ycf12, at least 3 peripheral proteins of the oxygen-evolving complex and a large number of cofactors. It forms dimeric complexes. It depends on The D1/D2 heterodimer binds P680, chlorophylls that are the primary electron donor of PSII, and subsequent electron acceptors. It shares a non-heme iron and each subunit binds pheophytin, quinone, additional chlorophylls, carotenoids and lipids. There is also a Cl(-1) ion associated with D1 and D2, which is required for oxygen evolution. The PSII complex binds additional chlorophylls, carotenoids and specific lipids. as a cofactor.

It is found in the plastid. The protein resides in the chloroplast thylakoid membrane. It carries out the reaction 2 a plastoquinone + 4 hnu + 2 H2O = 2 a plastoquinol + O2. Photosystem II (PSII) is a light-driven water:plastoquinone oxidoreductase that uses light energy to abstract electrons from H(2)O, generating O(2) and a proton gradient subsequently used for ATP formation. It consists of a core antenna complex that captures photons, and an electron transfer chain that converts photonic excitation into a charge separation. The D1/D2 (PsbA/PsbD) reaction center heterodimer binds P680, the primary electron donor of PSII as well as several subsequent electron acceptors. D2 is needed for assembly of a stable PSII complex. In Angiopteris evecta (Mule's foot fern), this protein is Photosystem II D2 protein.